The following is a 162-amino-acid chain: Small ribosomal subunit protein uS7m (162 aa).

It belongs to the universal ribosomal protein uS7 family. Part of the small ribosomal subunit.

It is found in the mitochondrion. Its function is as follows. One of the primary rRNA binding proteins, it binds directly to 16S-like rRNA where it nucleates assembly of the head domain of the small subunit. This Dictyostelium discoideum (Social amoeba) protein is Small ribosomal subunit protein uS7m (mrps7).